Consider the following 342-residue polypeptide: MANVALLSAASPSTSSAAPRLRHVARRRPSRRSACPRSAASRLSIMAALGEDPIRQWILTEGKATKITGVSSIGGGCINSAQCYKTDASSFFVKTNGRIGPSMFEGEALGLKAMYDTNSIRVPLPYKVGSLPTGGSFIIMEFIEFGCSRGDQSALGRKLAEMHKAAKSDKGYGFYVDNTIGSTPQINTWTADWIEFYSKHRLGFQLELITQRFGDSAIYDKGQRLIENMHPLFEGAVMEPCLLHGDLWSGNISSDTNGEPVILDPACYYGHNEAEFGMSWCAGFGGEFYSSYFEVMPKQPGFEKRRDLYLLYHYLNHYNLFGSGYRSSAMSIIDDYLRMLKA.

The N-terminal 46 residues, 1 to 46, are a transit peptide targeting the chloroplast; that stretch reads MANVALLSAASPSTSSAAPRLRHVARRRPSRRSACPRSAASRLSIM. Residue 141 to 143 coordinates ATP; the sequence is EFI. The active-site Proton acceptor is Asp-246.

The protein belongs to the fructosamine kinase family.

Its subcellular location is the plastid. The protein localises to the chloroplast. The catalysed reaction is N(6)-D-ribulosyl-L-lysyl-[protein] + ATP = N(6)-(3-O-phospho-D-ribulosyl)-L-lysyl-[protein] + ADP + H(+). It catalyses the reaction N(6)-(D-erythrulosyl)-L-lysyl-[protein] + ATP = N(6)-(3-O-phospho-D-erythrulosyl)-L-lysyl-[protein] + ADP + H(+). Its function is as follows. Initiates a process leading to the deglycation of proteins. Phosphorylates low-molecular-mass and protein-bound erythrulosamines and ribulosamines, but not fructosamines or psicosamines, on the third carbon of the sugar moiety. Protein-bound erythrulosamine 3-phosphates and ribulosamine 3-phosphates are unstable and decompose under physiological conditions. In Oryza sativa subsp. japonica (Rice), this protein is Protein-ribulosamine 3-kinase, chloroplastic.